The primary structure comprises 306 residues: Arginase (306 aa).

Positions 96, 123, 125, and 127 each coordinate Mn(2+). Substrate is bound by residues 125–129 (HTDFH), 136–138 (SGN), and Asp-178. Mn(2+) contacts are provided by Asp-226 and Asp-228. 2 residues coordinate substrate: Thr-240 and Glu-271.

This sequence belongs to the arginase family. It depends on Mn(2+) as a cofactor.

The catalysed reaction is L-arginine + H2O = urea + L-ornithine. It participates in nitrogen metabolism; urea cycle; L-ornithine and urea from L-arginine: step 1/1. This chain is Arginase (arcB), found in Brucella abortus biovar 1 (strain 9-941).